The primary structure comprises 253 residues: 5-oxoprolinase subunit A (253 aa).

This sequence belongs to the LamB/PxpA family. In terms of assembly, forms a complex composed of PxpA, PxpB and PxpC.

It catalyses the reaction 5-oxo-L-proline + ATP + 2 H2O = L-glutamate + ADP + phosphate + H(+). Catalyzes the cleavage of 5-oxoproline to form L-glutamate coupled to the hydrolysis of ATP to ADP and inorganic phosphate. This chain is 5-oxoprolinase subunit A, found in Bacillus anthracis (strain CDC 684 / NRRL 3495).